The following is a 635-amino-acid chain: Arabinoxylan arabinofuranohydrolase (635 aa).

Residues 1-26 (MIRKCLVLFLSFALLLSVFPMLNVDA) form the signal peptide. Asp49 serves as the catalytic Proton acceptor. Catalysis depends on Glu248, which acts as the Proton donor. Residue Asn311 participates in substrate binding. 2 consecutive CBM6 domains span residues 379–508 (TRVE…WQFT) and 517–634 (TKVE…IEFS). Ca(2+)-binding residues include Glu382, Glu384, Asn406, Leu407, Asp503, Glu520, Glu522, Asp539, Tyr544, Asp620, Trp624, Asp625, and Asp629.

This sequence belongs to the glycosyl hydrolase 43 family.

The protein localises to the secreted. It catalyses the reaction Hydrolysis of terminal non-reducing alpha-L-arabinofuranoside residues in alpha-L-arabinosides.. It functions in the pathway glycan degradation; xylan degradation. Its activity is regulated as follows. Activated by calcium and magnesium. Inhibited by copper. Functionally, cleaves arabinose units from O-2- or O-3-monosubstituted xylose residues, thereby assisting in arabinoxylan (AX) and short-chain arabinoxylo-oligosaccharide (AXOS) degradation. Preferres wheat flour xylan over oat spelt xylan as substrate. Does not display endoxylanase activity. In Paenibacillus polymyxa (Bacillus polymyxa), this protein is Arabinoxylan arabinofuranohydrolase (xynD).